Reading from the N-terminus, the 574-residue chain is Streptolysin O (574 aa).

The signal sequence occupies residues 1–36; it reads MKDMSNKKIFKKYSRVAGLLTAALIVGNLVTANADS. A compositionally biased stretch (low complexity) spans 37–52; the sequence is NKQNTANTETTTTNEQ. Disordered regions lie at residues 37-64 and 84-111; these read NKQNTANTETTTTNEQPKPESSELTTEK and KEMPLESAEKEEKKSEDNKKSEEDHTEE. Over residues 53–64 the composition is skewed to basic and acidic residues; the sequence is PKPESSELTTEK. A run of 4 beta stranded transmembrane segments spans residues 263-276, 283-292, 361-370, and 378-390; these read KSQIEAALNVNSKI, IDFKSISKGE, SNDVEAAFSA, and KTNGKYSDILENS. Residues 532–542 carry the Conserved undecapeptide motif; it reads ECTGLAWEWWR. The short motif at 564-565 is the Cholesterol binding element; it reads TL.

It belongs to the cholesterol-dependent cytolysin family. Homooligomeric pore complex of 35 to 50 subunits; when inserted in the host membrane.

It localises to the secreted. The protein localises to the host cell membrane. In terms of biological role, a cholesterol-dependent toxin that causes cytolysis by forming pores in cholesterol containing host membranes. After binding to target membranes, the protein undergoes a major conformation change, leading to its insertion in the host membrane and formation of an oligomeric pore complex. Cholesterol is required for binding to host membranes, membrane insertion and pore formation; cholesterol binding is mediated by a Thr-Leu pair in the C-terminus. Can be reversibly inactivated by oxidation. The sequence is that of Streptolysin O (slo) from Streptococcus canis.